Consider the following 210-residue polypeptide: Translation initiation factor IF-3 (210 aa).

Residues 169 to 210 (APKQAPAPKKERTEESAEKAGSAGETEPVPAASAAAEAPANV) form a disordered region. The segment covering 176–186 (PKKERTEESAE) has biased composition (basic and acidic residues). Over residues 187 to 210 (KAGSAGETEPVPAASAAAEAPANV) the composition is skewed to low complexity.

The protein belongs to the IF-3 family. As to quaternary structure, monomer.

The protein resides in the cytoplasm. IF-3 binds to the 30S ribosomal subunit and shifts the equilibrium between 70S ribosomes and their 50S and 30S subunits in favor of the free subunits, thus enhancing the availability of 30S subunits on which protein synthesis initiation begins. In Deinococcus deserti (strain DSM 17065 / CIP 109153 / LMG 22923 / VCD115), this protein is Translation initiation factor IF-3.